The following is a 275-amino-acid chain: Diaminopimelate epimerase (275 aa).

Asn12, Gln45, and Asn65 together coordinate substrate. Cys74 acts as the Proton donor in catalysis. Residues 75–76, Asn158, Asn191, and 209–210 each bind substrate; these read GN and ER. Catalysis depends on Cys218, which acts as the Proton acceptor. Position 219-220 (219-220) interacts with substrate; the sequence is GT.

It belongs to the diaminopimelate epimerase family. Homodimer.

It localises to the cytoplasm. The enzyme catalyses (2S,6S)-2,6-diaminopimelate = meso-2,6-diaminopimelate. It functions in the pathway amino-acid biosynthesis; L-lysine biosynthesis via DAP pathway; DL-2,6-diaminopimelate from LL-2,6-diaminopimelate: step 1/1. Its function is as follows. Catalyzes the stereoinversion of LL-2,6-diaminopimelate (L,L-DAP) to meso-diaminopimelate (meso-DAP), a precursor of L-lysine and an essential component of the bacterial peptidoglycan. This is Diaminopimelate epimerase from Shewanella frigidimarina (strain NCIMB 400).